The primary structure comprises 387 residues: MATTKSVLVLIFMILATTSSTFATLGEMVTVLSTDGGGIKGIIPGIIPEFLEGQLQKMDNNADARLADYFDVIGGTSTGGLLTAMITTPNENNRPFAAAKDIVPFYFQHGPHIFNSSTGQFFGPKYDGKYLMQVLQEKLGETRVHQALTEVAISSFDIKTNKPVIFTKSNLAKSPELDAKMYDICYSTAAAPIYFPPHHFVTHTSNGATYEFNLVDGGVATVGDPALLSLSVATRLAQEDPAFSSIKSLDYKQMLLLSLGTGTNSEFDKTYTAEEAAKWGPLRWMLAIQQMTNAASSYMTDYYISTVFQARHSQNNYLRVQENALNGTTTEMDDASEANMELLVQVGETLLKKPVSKDSPETYEEALKRFAKLLSDRKKLRANKASY.

The first 23 residues, 1–23 (MATTKSVLVLIFMILATTSSTFA), serve as a signal peptide directing secretion. Positions 32–230 (LSTDGGGIKG…TVGDPALLSL (199 aa)) constitute a PNPLA domain. Residues 36–41 (GGGIKG) carry the GXGXXG motif. The GXSXG motif lies at 75-79 (GTSTG). Residue Ser77 is the Nucleophile of the active site. The N-linked (GlcNAc...) asparagine glycan is linked to Asn115. Asp216 (proton acceptor) is an active-site residue. The DGA/G motif lies at 216–218 (DGG). Positions 322-385 (ENALNGTTTE…DRKKLRANKA (64 aa)) form a coiled coil. N-linked (GlcNAc...) asparagine glycosylation is present at Asn326.

Belongs to the patatin family. In terms of tissue distribution, tuber.

Its subcellular location is the vacuole. Its function is as follows. Probable lipolytic acyl hydrolase (LAH), an activity which is thought to be involved in the response of tubers to pathogens. The sequence is that of Patatin-11 from Solanum tuberosum (Potato).